A 294-amino-acid polypeptide reads, in one-letter code: Aquaporin NIP1-2 (294 aa).

Met-1 carries the N-acetylmethionine modification. The next 2 helical transmembrane spans lie at 54-74 and 82-102; these read LMAE…AVAV and VTLP…VYSL. Residues 111 to 113 carry the NPA 1 motif; sequence NPA. 3 helical membrane passes run 133–153, 177–197, and 201–221; these read VISQ…LFGL, SFVI…GVAT, and AIGE…VIIA. An NPA 2 motif is present at residues 230-232; the sequence is NPG. A helical transmembrane segment spans residues 248–268; the sequence is WIYIVSPIVGAVSGAWVYNMV. Ser-283 carries the post-translational modification Phosphoserine.

Belongs to the MIP/aquaporin (TC 1.A.8) family. NIP (TC 1.A.8.12) subfamily. As to expression, expressed in developing seeds.

Its subcellular location is the membrane. Its function is as follows. Water channel probably required to promote glycerol permeability and water transport across cell membranes. The chain is Aquaporin NIP1-2 (NIP1-2) from Arabidopsis thaliana (Mouse-ear cress).